We begin with the raw amino-acid sequence, 264 residues long: Tryptophan synthase alpha chain (264 aa).

Catalysis depends on proton acceptor residues glutamate 49 and aspartate 60.

This sequence belongs to the TrpA family. As to quaternary structure, tetramer of two alpha and two beta chains.

It carries out the reaction (1S,2R)-1-C-(indol-3-yl)glycerol 3-phosphate + L-serine = D-glyceraldehyde 3-phosphate + L-tryptophan + H2O. It participates in amino-acid biosynthesis; L-tryptophan biosynthesis; L-tryptophan from chorismate: step 5/5. Its function is as follows. The alpha subunit is responsible for the aldol cleavage of indoleglycerol phosphate to indole and glyceraldehyde 3-phosphate. The polypeptide is Tryptophan synthase alpha chain (Geotalea daltonii (strain DSM 22248 / JCM 15807 / FRC-32) (Geobacter daltonii)).